Consider the following 171-residue polypeptide: Putative F-box protein At1g32020 (171 aa).

Residues 3 to 49 form the F-box domain; sequence CDRISTLPDHLVAKIVSYLGIKDSIKTSVLSKRWEFVWLKVVGLDLK.

This Arabidopsis thaliana (Mouse-ear cress) protein is Putative F-box protein At1g32020.